The chain runs to 370 residues: Cathepsin B-like cysteine proteinase 3 (370 aa).

Residues 1 to 16 (MLKVYFLALFLAGCSA) form the signal peptide. A propeptide spanning residues 17–91 (FVLDEIRGIN…FVRGEIVPEP (75 aa)) is cleaved from the precursor. 6 disulfides stabilise this stretch: Cys105-Cys134, Cys117-Cys162, Cys153-Cys210, Cys154-Cys158, Cys190-Cys214, and Cys198-Cys202. Cys120 is an active-site residue. Asn138 carries an N-linked (GlcNAc...) asparagine glycan. Active-site residues include His284 and Asn304.

Belongs to the peptidase C1 family.

The sequence is that of Cathepsin B-like cysteine proteinase 3 (cpr-3) from Caenorhabditis elegans.